We begin with the raw amino-acid sequence, 67 residues long: Large ribosomal subunit protein bL35 (67 aa).

The protein belongs to the bacterial ribosomal protein bL35 family.

The polypeptide is Large ribosomal subunit protein bL35 (Leptospira interrogans serogroup Icterohaemorrhagiae serovar Lai (strain 56601)).